Here is a 236-residue protein sequence, read N- to C-terminus: Potassium/proton antiporter CemA (236 aa).

The next 4 helical transmembrane spans lie at 18–38 (YIIS…FLVL), 114–134 (IAHV…LINA), 161–181 (LILF…KILI), and 196–216 (FIFL…KYWI).

This sequence belongs to the CemA family.

Its subcellular location is the plastid. The protein localises to the chloroplast inner membrane. The catalysed reaction is K(+)(in) + H(+)(out) = K(+)(out) + H(+)(in). Its function is as follows. Contributes to K(+)/H(+) antiport activity by supporting proton efflux to control proton extrusion and homeostasis in chloroplasts in a light-dependent manner to modulate photosynthesis. Prevents excessive induction of non-photochemical quenching (NPQ) under continuous-light conditions. Indirectly promotes efficient inorganic carbon uptake into chloroplasts. The sequence is that of Potassium/proton antiporter CemA from Mesostigma viride (Green alga).